The chain runs to 135 residues: Transcription antitermination protein NusB (135 aa).

It belongs to the NusB family.

Functionally, involved in transcription antitermination. Required for transcription of ribosomal RNA (rRNA) genes. Binds specifically to the boxA antiterminator sequence of the ribosomal RNA (rrn) operons. This Lacticaseibacillus paracasei (strain ATCC 334 / BCRC 17002 / CCUG 31169 / CIP 107868 / KCTC 3260 / NRRL B-441) (Lactobacillus paracasei) protein is Transcription antitermination protein NusB.